A 702-amino-acid chain; its full sequence is Elongation factor G (702 aa).

Residues 8–290 form the tr-type G domain; it reads SRYRNIGISA…AIIEFLPAPN (283 aa). Residues 17-24, 88-92, and 142-145 each bind GTP; these read AHIDAGKT, DTPGH, and NKMD.

It belongs to the TRAFAC class translation factor GTPase superfamily. Classic translation factor GTPase family. EF-G/EF-2 subfamily.

The protein resides in the cytoplasm. Its function is as follows. Catalyzes the GTP-dependent ribosomal translocation step during translation elongation. During this step, the ribosome changes from the pre-translocational (PRE) to the post-translocational (POST) state as the newly formed A-site-bound peptidyl-tRNA and P-site-bound deacylated tRNA move to the P and E sites, respectively. Catalyzes the coordinated movement of the two tRNA molecules, the mRNA and conformational changes in the ribosome. This chain is Elongation factor G, found in Buchnera aphidicola subsp. Acyrthosiphon pisum (strain 5A).